Consider the following 297-residue polypeptide: tRNA uridine(34) hydroxylase (297 aa).

The region spanning 137 to 232 (RGDDVVFFDG…YGEKYGDKGL (96 aa)) is the Rhodanese domain. Cys192 serves as the catalytic Cysteine persulfide intermediate.

This sequence belongs to the TrhO family.

It catalyses the reaction uridine(34) in tRNA + AH2 + O2 = 5-hydroxyuridine(34) in tRNA + A + H2O. Catalyzes oxygen-dependent 5-hydroxyuridine (ho5U) modification at position 34 in tRNAs. The polypeptide is tRNA uridine(34) hydroxylase (Corynebacterium urealyticum (strain ATCC 43042 / DSM 7109)).